The following is a 382-amino-acid chain: Glutamyl-tRNA reductase (382 aa).

Substrate is bound by residues 38 to 41, serine 85, 90 to 92, and glutamine 96; these read TCNR and ENQ. Catalysis depends on cysteine 39, which acts as the Nucleophile. NADP(+) is bound at residue 164 to 169; sequence GAGEIG.

The protein belongs to the glutamyl-tRNA reductase family. As to quaternary structure, homodimer.

The enzyme catalyses (S)-4-amino-5-oxopentanoate + tRNA(Glu) + NADP(+) = L-glutamyl-tRNA(Glu) + NADPH + H(+). It participates in porphyrin-containing compound metabolism; protoporphyrin-IX biosynthesis; 5-aminolevulinate from L-glutamyl-tRNA(Glu): step 1/2. Functionally, catalyzes the NADPH-dependent reduction of glutamyl-tRNA(Glu) to glutamate 1-semialdehyde (GSA). This chain is Glutamyl-tRNA reductase, found in Methanococcus maripaludis (strain DSM 14266 / JCM 13030 / NBRC 101832 / S2 / LL).